The primary structure comprises 397 residues: Exodeoxyribonuclease 7 large subunit (397 aa).

Belongs to the XseA family. Heterooligomer composed of large and small subunits.

It localises to the cytoplasm. The enzyme catalyses Exonucleolytic cleavage in either 5'- to 3'- or 3'- to 5'-direction to yield nucleoside 5'-phosphates.. Bidirectionally degrades single-stranded DNA into large acid-insoluble oligonucleotides, which are then degraded further into small acid-soluble oligonucleotides. This chain is Exodeoxyribonuclease 7 large subunit, found in Anaplasma marginale (strain Florida).